The sequence spans 206 residues: Cytidylate kinase (206 aa).

9-17 (GPAAAGKGT) contributes to the ATP binding site. Residues 155–168 (LRERDRRDREREAA) show a composition bias toward basic and acidic residues. Residues 155-174 (LRERDRRDREREAAPLRPAP) are disordered.

The protein belongs to the cytidylate kinase family. Type 1 subfamily.

It is found in the cytoplasm. The enzyme catalyses CMP + ATP = CDP + ADP. The catalysed reaction is dCMP + ATP = dCDP + ADP. The sequence is that of Cytidylate kinase from Cereibacter sphaeroides (strain KD131 / KCTC 12085) (Rhodobacter sphaeroides).